The chain runs to 460 residues: Diguanylate cyclase DosC (460 aa).

H98 is a binding site for heme. The 134-residue stretch at T325–A458 folds into the GGDEF domain. D333 provides a ligand contact to Mg(2+). Residues N341 and D350 each contribute to the substrate site. A Mg(2+)-binding site is contributed by D376. Catalysis depends on D376, which acts as the Proton acceptor.

Requires heme as cofactor. It depends on Mg(2+) as a cofactor.

The enzyme catalyses 2 GTP = 3',3'-c-di-GMP + 2 diphosphate. The protein operates within purine metabolism; 3',5'-cyclic di-GMP biosynthesis. In terms of biological role, globin-coupled heme-based oxygen sensor protein displaying diguanylate cyclase (DGC) activity in response to oxygen availability. Thus, catalyzes the synthesis of cyclic diguanylate (c-di-GMP) via the condensation of 2 GTP molecules. Cyclic-di-GMP is a second messenger which controls cell surface-associated traits in bacteria. This chain is Diguanylate cyclase DosC (dosC), found in Escherichia coli O157:H7.